Here is a 350-residue protein sequence, read N- to C-terminus: Quinone oxidoreductase-like protein 2 (350 aa).

At Lys-36 the chain carries N6-acetyllysine. Lys-201 is modified (N6-succinyllysine). N6-acetyllysine occurs at positions 302 and 328.

It belongs to the zinc-containing alcohol dehydrogenase family. Quinone oxidoreductase subfamily.

This chain is Quinone oxidoreductase-like protein 2, found in Rattus norvegicus (Rat).